The chain runs to 89 residues: Small ribosomal subunit protein uS14 (89 aa).

Belongs to the universal ribosomal protein uS14 family. Part of the 30S ribosomal subunit. Contacts proteins S3 and S10.

Its function is as follows. Binds 16S rRNA, required for the assembly of 30S particles and may also be responsible for determining the conformation of the 16S rRNA at the A site. The chain is Small ribosomal subunit protein uS14 from Exiguobacterium sibiricum (strain DSM 17290 / CCUG 55495 / CIP 109462 / JCM 13490 / 255-15).